A 205-amino-acid chain; its full sequence is Ribonuclease HII (205 aa).

Residues 13–205 (TIVAGVDEVG…APVKYMLSMC (193 aa)) form the RNase H type-2 domain. Residues Asp-19, Glu-20, and Asp-114 each coordinate a divalent metal cation.

It belongs to the RNase HII family. It depends on Mn(2+) as a cofactor. Mg(2+) is required as a cofactor.

It localises to the cytoplasm. It catalyses the reaction Endonucleolytic cleavage to 5'-phosphomonoester.. Its function is as follows. Endonuclease that specifically degrades the RNA of RNA-DNA hybrids. The polypeptide is Ribonuclease HII (Blochmanniella floridana).